Here is a 587-residue protein sequence, read N- to C-terminus: Pectinesterase 2 (587 aa).

Residues 1–40 (MAPIKEFISKFSDFKNNKKLILSSAAIALLLLASIVGIAA) form the signal peptide. 2 N-linked (GlcNAc...) asparagine glycosylation sites follow: Asn-99 and Asn-218. 2 residues coordinate substrate: Thr-351 and Gln-381. Asp-404 (proton donor) is an active-site residue. The cysteines at positions 418 and 438 are disulfide-linked. Asp-425 acts as the Nucleophile in catalysis. Positions 493 and 495 each coordinate substrate.

It in the N-terminal section; belongs to the PMEI family. In the C-terminal section; belongs to the pectinesterase family. Expressed in flower buds.

Its subcellular location is the secreted. It localises to the cell wall. The enzyme catalyses [(1-&gt;4)-alpha-D-galacturonosyl methyl ester](n) + n H2O = [(1-&gt;4)-alpha-D-galacturonosyl](n) + n methanol + n H(+). Its pathway is glycan metabolism; pectin degradation; 2-dehydro-3-deoxy-D-gluconate from pectin: step 1/5. Functionally, acts in the modification of cell walls via demethylesterification of cell wall pectin. The protein is Pectinesterase 2 (PME2) of Arabidopsis thaliana (Mouse-ear cress).